A 906-amino-acid chain; its full sequence is Protein translocase subunit SecA (906 aa).

ATP contacts are provided by residues glutamine 86, 104 to 108 (GEGKT), and aspartate 499. The interval 865–885 (VSRIDPKDRNPEDPTSWGRVS) is disordered. Zn(2+)-binding residues include cysteine 890, cysteine 892, cysteine 901, and histidine 902.

It belongs to the SecA family. As to quaternary structure, monomer and homodimer. Part of the essential Sec protein translocation apparatus which comprises SecA, SecYEG and auxiliary proteins SecDF-YajC and YidC. It depends on Zn(2+) as a cofactor.

Its subcellular location is the cell inner membrane. The protein localises to the cytoplasm. The catalysed reaction is ATP + H2O + cellular proteinSide 1 = ADP + phosphate + cellular proteinSide 2.. Part of the Sec protein translocase complex. Interacts with the SecYEG preprotein conducting channel. Has a central role in coupling the hydrolysis of ATP to the transfer of proteins into and across the cell membrane, serving both as a receptor for the preprotein-SecB complex and as an ATP-driven molecular motor driving the stepwise translocation of polypeptide chains across the membrane. The sequence is that of Protein translocase subunit SecA from Rickettsia canadensis (strain McKiel).